The following is a 301-amino-acid chain: Probable splicing factor ECU05_1440 (301 aa).

Positions 1-70 (MQIFIGKIPN…APISVERANG (70 aa)) constitute an RRM 1 domain. 2 disordered regions span residues 106–140 (PPMR…SFRM) and 255–301 (SKDE…AEND). Composition is skewed to basic and acidic residues over residues 110–140 (YESR…SFRM) and 255–270 (SKDE…HMRS). The RRM 2 domain occupies 182-255 (LKVVFENIAP…HILKTRSYLS (74 aa)).

The protein belongs to the splicing factor SR family.

It localises to the nucleus. In terms of biological role, plays a role in splicing. This is Probable splicing factor ECU05_1440 from Encephalitozoon cuniculi (strain GB-M1) (Microsporidian parasite).